A 1502-amino-acid chain; its full sequence is DNA-directed RNA polymerase subunit beta' (1502 aa).

The Zn(2+) site is built by Cys-60, Cys-62, Cys-75, and Cys-78. Residues 265 to 293 (RKQRDLEDAEQLTGAERERKEYEASQERE) are disordered. Positions 279-293 (AERERKEYEASQERE) are enriched in basic and acidic residues. Residues Asp-626, Asp-628, and Asp-630 each contribute to the Mg(2+) site. Zn(2+) is bound by residues Cys-1002, Cys-1075, Cys-1082, and Cys-1085. Residues 1472–1502 (SDDNGDEVGKNGEFADETPFTGDSDDRDNEI) form a disordered region.

This sequence belongs to the RNA polymerase beta' chain family. As to quaternary structure, the RNAP catalytic core consists of 2 alpha, 1 beta, 1 beta' and 1 omega subunit. When a sigma factor is associated with the core the holoenzyme is formed, which can initiate transcription. It depends on Mg(2+) as a cofactor. Requires Zn(2+) as cofactor.

The catalysed reaction is RNA(n) + a ribonucleoside 5'-triphosphate = RNA(n+1) + diphosphate. Its function is as follows. DNA-dependent RNA polymerase catalyzes the transcription of DNA into RNA using the four ribonucleoside triphosphates as substrates. The chain is DNA-directed RNA polymerase subunit beta' from Roseiflexus castenholzii (strain DSM 13941 / HLO8).